Consider the following 503-residue polypeptide: TGF-beta receptor type-1 (503 aa).

Residues 1–33 form the signal peptide; it reads MEAAVAAPRPRLLLLVLAAAAAAAAALLPGATA. The Extracellular portion of the chain corresponds to 34–126; that stretch reads LQCFCHLCTK…SSPGLGPVEL (93 aa). Cystine bridges form between cysteine 36/cysteine 54, cysteine 38/cysteine 41, cysteine 48/cysteine 71, cysteine 86/cysteine 100, and cysteine 101/cysteine 106. Asparagine 45 is a glycosylation site (N-linked (GlcNAc...) asparagine). Residues 127 to 147 form a helical membrane-spanning segment; the sequence is AAVIAGPVCFVCISLMLMVYI. Topologically, residues 148–503 are cytoplasmic; the sequence is CHNRTVIHHR…QLSQQEGIKM (356 aa). The residue at position 165 (serine 165) is a Phosphoserine. The GS domain occupies 175–204; that stretch reads TTLKDLIYDMTTSGSGSGLPLLVQRTIART. Phosphothreonine; by TGFBR2 occurs at positions 185 and 186. Residues serine 187, serine 189, and serine 191 each carry the phosphoserine; by TGFBR2 modification. An FKBP1A-binding motif is present at residues 193–194; the sequence is LP. The 291-residue stretch at 205–495 folds into the Protein kinase domain; it reads IVLQESIGKG…LRIKKTLSQL (291 aa). ATP contacts are provided by residues 211 to 219 and lysine 232; that span reads IGKGRFGEV. Lysine 268 is covalently cross-linked (Glycyl lysine isopeptide (Lys-Gly) (interchain with G-Cter in ubiquitin)). Catalysis depends on aspartate 333, which acts as the Proton acceptor. Lysine 391 is covalently cross-linked (Glycyl lysine isopeptide (Lys-Gly) (interchain with G-Cter in SUMO)).

The protein belongs to the protein kinase superfamily. TKL Ser/Thr protein kinase family. TGFB receptor subfamily. Homodimer; in the endoplasmic reticulum but also at the cell membrane. Heterohexamer; TGFB1, TGFB2 and TGFB3 homodimeric ligands assemble a functional receptor composed of two TGFBR1 and TGFBR2 heterodimers to form a ligand-receptor heterohexamer. The respective affinity of TGBRB1 and TGFBR2 for the ligands may modulate the kinetics of assembly of the receptor and may explain the different biological activities of TGFB1, TGFB2 and TGFB3. Component of a complex composed of TSC22D1 (via N-terminus), TGFBR1 and TGFBR2; the interaction between TSC22D1 and TGFBR1 is inhibited by SMAD7 and promoted by TGFB1. Interacts with CD109; inhibits TGF-beta receptor activation in keratinocytes. Interacts with RBPMS. Interacts (unphosphorylated) with FKBP1A; prevents TGFBR1 phosphorylation by TGFBR2 and stabilizes it in the inactive conformation. Interacts with SMAD2, SMAD3 and ZFYVE9; ZFYVE9 recruits SMAD2 and SMAD3 to the TGF-beta receptor. Interacts with TRAF6 and MAP3K7; induces MAP3K7 activation by TRAF6. Interacts with PARD6A; involved in TGF-beta induced epithelial to mesenchymal transition. Interacts with NEDD4L. Interacts with SMAD7, SMURF1 and SMURF2; SMAD7 recruits NEDD4L, SMURF1 and SMURF2 to the TGF-beta receptor. Interacts with USP15 and VPS39. Interacts with SDCBP (via C-terminus). Interacts with CAV1 and this interaction is impaired in the presence of SDCBP. Interacts with APPL1; interaction is TGF beta dependent; mediates trafficking of the TGFBR1 from the endosomes to the nucleus via microtubules in a TRAF6-dependent manner. Interacts with GPR50; this interaction promotes the constitutive activation of SMAD signaling pathway. The cofactor is Mg(2+). It depends on Mn(2+) as a cofactor. Post-translationally, phosphorylated at basal levels in the absence of ligand. Activated upon phosphorylation by TGFBR2, mainly in the GS domain. Phosphorylation in the GS domain abrogates FKBP1A-binding. In terms of processing, N-Glycosylated. Ubiquitinated; undergoes ubiquitination catalyzed by several E3 ubiquitin ligases including SMURF1, SMURF2 and NEDD4L2. Results in the proteasomal and/or lysosomal degradation of the receptor thereby negatively regulating its activity. Deubiquitinated by USP15, leading to stabilization of the protein and enhanced TGF-beta signal. Its ubiquitination and proteasome-mediated degradation is negatively regulated by SDCBP. Ubiquitinated by BFAR via'Lys-63'-linked ubiquitination at Lys-268, leading to TGF-beta signaling activation. As to expression, found in all tissues examined, most abundant in placenta and least abundant in brain and heart. Expressed in a variety of cancer cell lines.

It localises to the cell membrane. Its subcellular location is the cell junction. The protein localises to the tight junction. It is found in the cell surface. The protein resides in the membrane raft. The catalysed reaction is L-threonyl-[receptor-protein] + ATP = O-phospho-L-threonyl-[receptor-protein] + ADP + H(+). The enzyme catalyses L-seryl-[receptor-protein] + ATP = O-phospho-L-seryl-[receptor-protein] + ADP + H(+). With respect to regulation, kept in an inactive conformation by FKBP1A preventing receptor activation in absence of ligand. CD109 is another inhibitor of the receptor. Functionally, transmembrane serine/threonine kinase forming with the TGF-beta type II serine/threonine kinase receptor, TGFBR2, the non-promiscuous receptor for the TGF-beta cytokines TGFB1, TGFB2 and TGFB3. Transduces the TGFB1, TGFB2 and TGFB3 signal from the cell surface to the cytoplasm and is thus regulating a plethora of physiological and pathological processes including cell cycle arrest in epithelial and hematopoietic cells, control of mesenchymal cell proliferation and differentiation, wound healing, extracellular matrix production, immunosuppression and carcinogenesis. The formation of the receptor complex composed of 2 TGFBR1 and 2 TGFBR2 molecules symmetrically bound to the cytokine dimer results in the phosphorylation and the activation of TGFBR1 by the constitutively active TGFBR2. Activated TGFBR1 phosphorylates SMAD2 which dissociates from the receptor and interacts with SMAD4. The SMAD2-SMAD4 complex is subsequently translocated to the nucleus where it modulates the transcription of the TGF-beta-regulated genes. This constitutes the canonical SMAD-dependent TGF-beta signaling cascade. Also involved in non-canonical, SMAD-independent TGF-beta signaling pathways. For instance, TGFBR1 induces TRAF6 autoubiquitination which in turn results in MAP3K7 ubiquitination and activation to trigger apoptosis. Also regulates epithelial to mesenchymal transition through a SMAD-independent signaling pathway through PARD6A phosphorylation and activation. The polypeptide is TGF-beta receptor type-1 (TGFBR1) (Homo sapiens (Human)).